The chain runs to 363 residues: UDP-N-acetylglucosamine--N-acetylmuramyl-(pentapeptide) pyrophosphoryl-undecaprenol N-acetylglucosamine transferase (363 aa).

Residues 10–12 (TGG), Asn124, Ser195, Ile250, and Gln295 contribute to the UDP-N-acetyl-alpha-D-glucosamine site.

This sequence belongs to the glycosyltransferase 28 family. MurG subfamily.

It is found in the cell membrane. The catalysed reaction is di-trans,octa-cis-undecaprenyl diphospho-N-acetyl-alpha-D-muramoyl-L-alanyl-D-glutamyl-meso-2,6-diaminopimeloyl-D-alanyl-D-alanine + UDP-N-acetyl-alpha-D-glucosamine = di-trans,octa-cis-undecaprenyl diphospho-[N-acetyl-alpha-D-glucosaminyl-(1-&gt;4)]-N-acetyl-alpha-D-muramoyl-L-alanyl-D-glutamyl-meso-2,6-diaminopimeloyl-D-alanyl-D-alanine + UDP + H(+). It participates in cell wall biogenesis; peptidoglycan biosynthesis. Functionally, cell wall formation. Catalyzes the transfer of a GlcNAc subunit on undecaprenyl-pyrophosphoryl-MurNAc-pentapeptide (lipid intermediate I) to form undecaprenyl-pyrophosphoryl-MurNAc-(pentapeptide)GlcNAc (lipid intermediate II). The polypeptide is UDP-N-acetylglucosamine--N-acetylmuramyl-(pentapeptide) pyrophosphoryl-undecaprenol N-acetylglucosamine transferase (Listeria monocytogenes serovar 1/2a (strain ATCC BAA-679 / EGD-e)).